The chain runs to 322 residues: uncharacterized protein (322 aa).

One can recognise a Radical SAM core domain in the interval 26–267; the sequence is HFGHKVFKVA…CDQLEIIPPE (242 aa). 3 residues coordinate [4Fe-4S] cluster: Cys42, Cys54, and Cys57.

The protein belongs to the radical SAM superfamily. It depends on [4Fe-4S] cluster as a cofactor.

This is an uncharacterized protein from Bacillus subtilis (strain 168).